Here is a 273-residue protein sequence, read N- to C-terminus: Urease accessory protein UreD (273 aa).

This sequence belongs to the UreD family. As to quaternary structure, ureD, UreF and UreG form a complex that acts as a GTP-hydrolysis-dependent molecular chaperone, activating the urease apoprotein by helping to assemble the nickel containing metallocenter of UreC. The UreE protein probably delivers the nickel.

It is found in the cytoplasm. Functionally, required for maturation of urease via the functional incorporation of the urease nickel metallocenter. The protein is Urease accessory protein UreD of Rhizobium johnstonii (strain DSM 114642 / LMG 32736 / 3841) (Rhizobium leguminosarum bv. viciae).